We begin with the raw amino-acid sequence, 1881 residues long: Ankyrin-1 (1881 aa).

Positions 1-827 (MPYSVGFREA…EDEGEELISF (827 aa)) are 89 kDa domain. ANK repeat units follow at residues 44–73 (NGLN…ILET), 77–106 (KGNT…NVNA), 110–139 (KGFT…NQNV), 143–172 (DGFT…KGKV), 174–201 (LPAL…NPDV), 205–234 (TGFT…SVNF), 238–267 (NGIT…QIET), 271–300 (DELT…PIQA), 304–333 (NGLS…EIDD), 337–366 (DHLT…KPNS), 370–399 (NGFT…SIDA), 403–432 (SGLT…SPNV), 436–465 (KVET…KVNA), 469–498 (DDQT…NPNL), 502–531 (AGHT…SQAC), 535–564 (KGFT…HPNA), 568–597 (NGLT…SPHS), 601–630 (NGYT…SANA), 634–663 (QGVT…NGNL), 667–696 (SGLT…MVDA), 700–729 (MGYT…DVNA), 733–762 (LGYS…SPNE), and 766–795 (DGTT…ETSF). The residue at position 105 (Asn105) is a (3S)-3-hydroxyasparagine; by HIF1AN; partial. The residue at position 233 (Asn233) is a (3S)-3-hydroxyasparagine; by HIF1AN; partial. Ser429 is subject to Phosphoserine. Asn431 and Asn464 each carry (3S)-3-hydroxyasparagine; by HIF1AN; partial. Asn629 and Asn662 each carry (3S)-3-hydroxyasparagine; by HIF1AN; partial. Asp695 carries the (3S)-3-hydroxyaspartate; by HIF1AN; partial modification. Position 728 is a (3S)-3-hydroxyasparagine; by HIF1AN; partial (Asn728). Ser759 carries the post-translational modification Phosphoserine. Asn761 carries the post-translational modification (3S)-3-hydroxyasparagine; by HIF1AN; partial. Ser781, Ser817, Ser834, and Ser856 each carry phosphoserine. The tract at residues 875 to 904 (EEQEQASKEYDEDSLIPSSPATETSDNISP) is disordered. The segment covering 890-904 (IPSSPATETSDNISP) has biased composition (polar residues). ZU5 domains follow at residues 913 to 1068 (FLVS…IMSR) and 1070 to 1216 (CQDY…LSDC). Position 961 is a phosphothreonine (Thr961). At Tyr1073 the chain carries Phosphotyrosine. Ser1082 carries the phosphoserine modification. Residues 1234–1362 (TAVPYMAKFV…QHILCHLNIT (129 aa)) form a UPA domain region. Thr1378 and Thr1380 each carry phosphothreonine. A 55 kDa regulatory domain region spans residues 1383–1881 (ALRYSILSES…SKDHTSTPNP (499 aa)). Phosphoserine is present on residues Ser1390, Ser1392, and Ser1396. Position 1400 is a phosphothreonine (Thr1400). The Death domain maps to 1403 to 1487 (AEMKMAVISE…EIVNMLEGSG (85 aa)). Ser1428 and Ser1486 each carry phosphoserine. The tract at residues 1486 to 1510 (SGRQSRNLKPDRRHTDRDYSLSPSQ) is disordered. The segment covering 1493 to 1504 (LKPDRRHTDRDY) has biased composition (basic and acidic residues). Residues Ser1523 and Ser1533 each carry the phosphoserine modification. The tract at residues 1583-1613 (SSLECSKAEDSDATGHEWKLEGALSEEPRGP) is disordered. Residues 1588–1612 (SKAEDSDATGHEWKLEGALSEEPRG) are compositionally biased toward basic and acidic residues. Ser1617 carries the post-translational modification Phosphoserine. Disordered stretches follow at residues 1637 to 1703 (LLEQ…LQDW), 1718 to 1791 (QGSW…EAKN), and 1840 to 1859 (ADAA…EDPS). Positions 1642-1658 (EGQRSEEKLPGSKRQDD) are enriched in basic and acidic residues. Ser1666, Ser1671, Ser1686, Ser1690, and Ser1696 each carry phosphoserine. A compositionally biased stretch (polar residues) spans 1683 to 1694 (ITHSPTVSQVTE). 2 stretches are compositionally biased toward polar residues: residues 1718–1739 (QGSW…STMT) and 1758–1771 (SEHT…AESS). Residues 1772-1781 (QADRDRRQQG) are compositionally biased toward basic and acidic residues.

As to quaternary structure, component of the ankyrin-1 complex in the erythrocyte, composed of ANK1, RHCE, RHAG, SLC4A1, EPB42, GYPA, GYPB and AQP1. Interacts with a number of integral membrane proteins and cytoskeletal proteins. Interacts (via N-terminus) with SPTB/spectrin (beta chain). Also interacts with TTN/titin. Isoform Mu17 interacts with OBSCN isoform 3/obscurin. Interacts with HIF1AN. Interacts (via ANK 1-5 repeats) with RHCE; this interaction mediates the primary membrane attachment site for ANK1. Interacts (via ANK 1-2 repeats) with AQP1 (via the N-terminal). Interacts (via ANK 1-13 repeats) with EPB42. Interacts directly with SLC4A1 (via the cytoplasmic domain); this interaction is mediated by the SLC4A1 Band 3-II and Band 3-III dimers. Regulated by phosphorylation. In terms of processing, palmitoylated. Post-translationally, hydroxylated by HIF1AN at several asparagine and 1 aspartate residue within ANK repeat region. Hydroxylation seems to increase the conformational stability of this region and may also modulate protein-protein interactions mediated by the ANK repeat region. (Microbial infection) Probably cleaved by P.falciparum SERA6; the cleavage probably causes the disruption of the actin cytoskeleton and the rupture of the erythrocyte cell membrane releasing the merozoites. Isoform Mu17, isoform Mu18, isoform Mu19 and isoform Mu20 are expressed in skeletal muscle. Isoform Br21 is expressed in brain.

It is found in the cytoplasm. It localises to the cytoskeleton. Its subcellular location is the membrane. The protein resides in the myofibril. The protein localises to the sarcomere. It is found in the m line. It localises to the sarcoplasmic reticulum. Its function is as follows. Component of the ankyrin-1 complex, a multiprotein complex involved in the stability and shape of the erythrocyte membrane. Attaches integral membrane proteins to cytoskeletal elements; binds to the erythrocyte membrane protein band 4.2, to Na-K ATPase, to the lymphocyte membrane protein GP85, and to the cytoskeletal proteins fodrin, tubulin, vimentin and desmin. Erythrocyte ankyrins also link spectrin (beta chain) to the cytoplasmic domain of the erythrocytes anion exchange protein; they retain most or all of these binding functions. Together with obscurin in skeletal muscle may provide a molecular link between the sarcoplasmic reticulum and myofibrils. The sequence is that of Ankyrin-1 from Homo sapiens (Human).